The primary structure comprises 245 residues: Small ribosomal subunit protein uS2 (245 aa).

The protein belongs to the universal ribosomal protein uS2 family.

In Dehalococcoides mccartyi (strain CBDB1), this protein is Small ribosomal subunit protein uS2.